The chain runs to 429 residues: UDP-N-acetylglucosamine 1-carboxyvinyltransferase (429 aa).

22–23 (KN) is a binding site for phosphoenolpyruvate. Arg-102 is a binding site for UDP-N-acetyl-alpha-D-glucosamine. Cys-126 functions as the Proton donor in the catalytic mechanism. Cys-126 carries the 2-(S-cysteinyl)pyruvic acid O-phosphothioketal modification. Residues 131–135 (RPVDL), Asp-316, and Ile-338 contribute to the UDP-N-acetyl-alpha-D-glucosamine site.

Belongs to the EPSP synthase family. MurA subfamily.

It localises to the cytoplasm. It catalyses the reaction phosphoenolpyruvate + UDP-N-acetyl-alpha-D-glucosamine = UDP-N-acetyl-3-O-(1-carboxyvinyl)-alpha-D-glucosamine + phosphate. It functions in the pathway cell wall biogenesis; peptidoglycan biosynthesis. Its function is as follows. Cell wall formation. Adds enolpyruvyl to UDP-N-acetylglucosamine. In Methylorubrum extorquens (strain CM4 / NCIMB 13688) (Methylobacterium extorquens), this protein is UDP-N-acetylglucosamine 1-carboxyvinyltransferase.